The sequence spans 470 residues: Nuclear receptor subfamily 0 group B member 1 (470 aa).

Repeat copies occupy residues 1 to 67 (MAGE…YRCC), 68 to 133 (FCGK…YRCC), and 134 to 200 (FCGE…YRCC). Residues 1 to 253 (MAGENHQWQG…RPVALKNPQV (253 aa)) are 4 X 67 AA tandem repeats. 3 short sequence motifs (LXXLL motif) span residues 13–17 (LYNML), 80–84 (LYSML), and 146–150 (LYSLL). One copy of the 4; truncated repeat lies at 201–253 (FCGEDHPQQGSTLYCMPTSTNQAQAAPEERPRAPWWDASSGALRPVALKNPQV). Residues 215-469 (CMPTSTNQAQ…DMMLEMLCTK (255 aa)) form the NR LBD domain. The AF-2 motif motif lies at 461–466 (MMLEML).

It belongs to the nuclear hormone receptor family. NR0 subfamily. Homodimer. Interacts with NR5A1, NR5A2, NR0B2 and with COPS2. Interacts with ESRRB; represses ESRRB activity at the GATA6 promoter.

Its subcellular location is the nucleus. The protein localises to the cytoplasm. Nuclear receptor that lacks a DNA-binding domain and acts as a corepressor that inhibits the transcriptional activity of other nuclear receptors through heterodimeric interactions. Component of a cascade required for the development of the hypothalamic-pituitary-adrenal-gonadal axis. May also have a role in the development of the embryo and in the maintenance of embryonic stem cell pluripotency. The chain is Nuclear receptor subfamily 0 group B member 1 (NR0B1) from Pongo pygmaeus (Bornean orangutan).